The chain runs to 659 residues: Pollen receptor-like kinase 6 (659 aa).

Positions 1–26 (MAAAVLNPGFFLLILLLSFSISPSLQ) are cleaved as a signal peptide. Residues 27–266 (YVSESEPLVR…SVPETSNKAA (240 aa)) are Extracellular-facing. A disulfide bridge connects residues cysteine 58 and cysteine 67. LRR repeat units follow at residues 95 to 118 (LPNLKTIRLDNNLLSGPLPHFFKL), 120 to 142 (GLKSLMLSNNSFSGEIRDDFFKD), 143 to 167 (MSKLKRLFLDHNKFEGSIPSSITQL), 168 to 190 (PQLEELHMQSNNLTGEIPPEFGS), and 192 to 214 (KNLKVLDLSTNSLDGIVPQSIAD). Asparagine 128 carries an N-linked (GlcNAc...) asparagine glycan. N-linked (GlcNAc...) asparagine glycosylation occurs at asparagine 179. Asparagine 221 is a glycosylation site (N-linked (GlcNAc...) asparagine). The interval 226-242 (EYLCGPVVDVGCENIEL) is LURE peptides binding. Cysteine 229 and cysteine 237 are oxidised to a cystine. The tract at residues 241-260 (ELNDPQEGQPPSKPSSSVPE) is disordered. Residues 267-287 (INAIMVSISLLLLFFIIVGVI) traverse the membrane as a helical segment. Topologically, residues 288–659 (KRRNKKKNPD…AVRRIEQVKT (372 aa)) are cytoplasmic. Residues 312–354 (VRISESSSTTAKRSTDSSRKRGGHSDDGSTKKGVSNIGKGGNG) are disordered. Residues 324-341 (RSTDSSRKRGGHSDDGST) are compositionally biased toward basic and acidic residues. A Protein kinase domain is found at 384 to 659 (KAAAEVLGNG…AVRRIEQVKT (276 aa)). ATP is bound by residues 390 to 398 (LGNGSLGSA) and lysine 412. Serine 464 is modified (phosphoserine). Phosphothreonine occurs at positions 484 and 557. Serine 561 is subject to Phosphoserine.

The protein belongs to the protein kinase superfamily. Ser/Thr protein kinase family. Interacts with ROPGEF8, ROPGEF9, ROPGEF12, ROPGEF13, PRK3, LIP1 and LIP2. Binds to LURE peptides via its LRR repeats; interacts with LURE1.1, LURE1.2, LURE1.3 and LURE1.4. In terms of tissue distribution, expressed specifically in the pollen tube, predominantly at the tip.

It localises to the cell membrane. The protein resides in the cytoplasmic granule. Key receptor for sensing species-specific attractants in cooperation with other pollen receptor-like kinases. Essential for pollen tube reorientation toward attractant peptides. This is Pollen receptor-like kinase 6 from Arabidopsis thaliana (Mouse-ear cress).